A 276-amino-acid polypeptide reads, in one-letter code: Rhomboid protease GlpG (276 aa).

Helical transmembrane passes span 94-114, 142-162, 169-189, 192-212, 229-249, and 250-270; these read GPFTLLLMAACILVFIIMNVV, ALMHFSVLHILFNLLWWWYLG, LGSGKLIVITIISALLSGYVQ, FSGPWFGGLSGVVYALMGYAW, LITFALLWLIAGWFDLFGMSI, and ANGAHVTGLAVGLAMAFADTL. The Nucleophile role is filled by Ser-201. The active site involves His-254.

It belongs to the peptidase S54 family.

The protein localises to the cell inner membrane. It catalyses the reaction Cleaves type-1 transmembrane domains using a catalytic dyad composed of serine and histidine that are contributed by different transmembrane domains.. Functionally, rhomboid-type serine protease that catalyzes intramembrane proteolysis. The protein is Rhomboid protease GlpG of Enterobacter sp. (strain 638).